Reading from the N-terminus, the 278-residue chain is Cysteine-rich repeat secretory protein 18 (278 aa).

Residues Met-1 to Ser-32 form the signal peptide. 2 consecutive Gnk2-homologous domains span residues Tyr-39–Thr-147 and Pro-160–Phe-267.

The protein belongs to the cysteine-rich repeat secretory protein family.

Its subcellular location is the secreted. This Arabidopsis thaliana (Mouse-ear cress) protein is Cysteine-rich repeat secretory protein 18 (CRRSP18).